Consider the following 191-residue polypeptide: Flagellar transcriptional regulator FlhC (191 aa).

Zn(2+) contacts are provided by cysteine 139, cysteine 142, cysteine 159, and cysteine 162.

Belongs to the FlhC family. As to quaternary structure, heterohexamer composed of two FlhC and four FlhD subunits. Each FlhC binds a FlhD dimer, forming a heterotrimer, and a hexamer assembles by dimerization of two heterotrimers. Zn(2+) is required as a cofactor.

It localises to the cytoplasm. Functionally, functions in complex with FlhD as a master transcriptional regulator that regulates transcription of several flagellar and non-flagellar operons by binding to their promoter region. Activates expression of class 2 flagellar genes, including fliA, which is a flagellum-specific sigma factor that turns on the class 3 genes. Also regulates genes whose products function in a variety of physiological pathways. The polypeptide is Flagellar transcriptional regulator FlhC (Enterobacter cloacae subsp. cloacae (strain ATCC 13047 / DSM 30054 / NBRC 13535 / NCTC 10005 / WDCM 00083 / NCDC 279-56)).